The chain runs to 115 residues: Parathyroid hormone (115 aa).

The N-terminal stretch at 1–25 (MMSAKDMVKVMIVMLAICFLARSDG) is a signal peptide. Positions 26–31 (KSVKKR) are excised as a propeptide. Residues 51–69 (RVEWLRKKLQDVHNFVALG) form an important for receptor binding region. A disordered region spans residues 77 to 99 (GSSQRPRKKEDNVLVESHQKSLG). Over residues 84 to 99 (KKEDNVLVESHQKSLG) the composition is skewed to basic and acidic residues.

Belongs to the parathyroid hormone family. In terms of assembly, interacts with PTH1R (via N-terminal extracellular domain).

Its subcellular location is the secreted. Its function is as follows. Parathyroid hormone elevates calcium level by dissolving the salts in bone and preventing their renal excretion. Acts by binding to its receptor, PTH1R, activating G protein-coupled receptor signaling. Stimulates [1-14C]-2-deoxy-D-glucose (2DG) transport and glycogen synthesis in osteoblastic cells. The chain is Parathyroid hormone from Bos taurus (Bovine).